Reading from the N-terminus, the 161-residue chain is Regulator of ribonuclease activity A (161 aa).

The protein belongs to the RraA family. In terms of assembly, homotrimer. Binds to both RNA-binding sites in the C-terminal region of Rne and to RhlB.

It is found in the cytoplasm. Its function is as follows. Globally modulates RNA abundance by binding to RNase E (Rne) and regulating its endonucleolytic activity. Can modulate Rne action in a substrate-dependent manner by altering the composition of the degradosome. Modulates RNA-binding and helicase activities of the degradosome. The polypeptide is Regulator of ribonuclease activity A (Escherichia fergusonii (strain ATCC 35469 / DSM 13698 / CCUG 18766 / IAM 14443 / JCM 21226 / LMG 7866 / NBRC 102419 / NCTC 12128 / CDC 0568-73)).